A 629-amino-acid polypeptide reads, in one-letter code: tRNA uridine 5-carboxymethylaminomethyl modification enzyme MnmG (629 aa).

Residues 13–18 (GGGHAG), Val125, and Ser180 each bind FAD. 273 to 287 (GPRYCPSIEDKIHRF) contacts NAD(+). Residue Gln370 participates in FAD binding.

Belongs to the MnmG family. As to quaternary structure, homodimer. Heterotetramer of two MnmE and two MnmG subunits. Requires FAD as cofactor.

The protein localises to the cytoplasm. Functionally, NAD-binding protein involved in the addition of a carboxymethylaminomethyl (cmnm) group at the wobble position (U34) of certain tRNAs, forming tRNA-cmnm(5)s(2)U34. The chain is tRNA uridine 5-carboxymethylaminomethyl modification enzyme MnmG from Shewanella oneidensis (strain ATCC 700550 / JCM 31522 / CIP 106686 / LMG 19005 / NCIMB 14063 / MR-1).